Consider the following 418-residue polypeptide: Xanthosine permease (418 aa).

Topologically, residues 1–9 (MSIAMRLKV) are cytoplasmic. Residues 10-30 (MSFLQYFIWGSWLVTLGSYMI) form a helical membrane-spanning segment. Over 31 to 41 (NTLHFTGANVG) the chain is Periplasmic. Residues 42 to 62 (MVYSSKGIAAIIMPGIMGIIA) form a helical membrane-spanning segment. Residues 63-70 (DKWLRAER) are Cytoplasmic-facing. A run of 2 helical transmembrane segments spans residues 71 to 91 (AYML…SVTD) and 92 to 112 (PDMM…TIAL). The Cytoplasmic segment spans residues 113 to 136 (SNSVSYSCLAQAGLDPVTAFPPIR). A helical membrane pass occupies residues 137 to 157 (VFGTVGFIVAMWAVSLLHLEL). The Periplasmic portion of the chain corresponds to 158-159 (SS). Residues 160–180 (LQLYIASGASLLLSAYALTLP) traverse the membrane as a helical segment. Residues 181-209 (KIPVAEKKATTSLASKLGLDAFVLFKNPR) lie on the Cytoplasmic side of the membrane. A helical membrane pass occupies residues 210–230 (MAIFFLFAMMLGAVLQITNVF). The Periplasmic segment spans residues 231–254 (GNPFLHDFARNPEFADSFVVKYPS). The chain crosses the membrane as a helical span at residues 255–275 (ILLSVSQMAEVGFILTIPFFL). Topologically, residues 276 to 277 (KR) are cytoplasmic. The helical transmembrane segment at 278–298 (FGIKTVMLMSMVAWTLRFGFF) threads the bilayer. At 299 to 306 (AYGDPSTT) the chain is on the periplasmic side. Residues 307 to 327 (GFILLLLSMIVYGCAFDFFNI) traverse the membrane as a helical segment. The Cytoplasmic portion of the chain corresponds to 328–348 (SGSVFVEQEVDSSIRASAQGL). Residues 349–369 (FMTMVNGVGAWVGSILSGMAV) form a helical membrane-spanning segment. The Periplasmic portion of the chain corresponds to 370 to 381 (DYFSVDGVKDWQ). The chain crosses the membrane as a helical span at residues 382–402 (TIWLVFAGYALFLAVIFFFGF). At 403–418 (KYNHDPEKIKHRAVTH) the chain is on the cytoplasmic side.

The protein belongs to the major facilitator superfamily. Nucleoside:H(+) symporter (NHS) (TC 2.A.1.10) family.

The protein localises to the cell inner membrane. It carries out the reaction xanthosine(in) + H(+)(in) = xanthosine(out) + H(+)(out). With respect to regulation, transport is abolished by the proton uncoupler 2,4-dinitrophenol. Uptake of xanthosine. Can also transport other nucleosides such as inosine, adenosine, cytidine, uridine and thymidine. Transport is driven by a proton motive force. In Escherichia coli (strain K12), this protein is Xanthosine permease.